A 433-amino-acid chain; its full sequence is Trigger factor (433 aa).

Residues 165–250 (GDSAIIDFEG…LHNIQEKVKV (86 aa)) enclose the PPIase FKBP-type domain.

Belongs to the FKBP-type PPIase family. Tig subfamily.

The protein resides in the cytoplasm. The enzyme catalyses [protein]-peptidylproline (omega=180) = [protein]-peptidylproline (omega=0). Functionally, involved in protein export. Acts as a chaperone by maintaining the newly synthesized protein in an open conformation. Functions as a peptidyl-prolyl cis-trans isomerase. The chain is Trigger factor from Sulfurimonas denitrificans (strain ATCC 33889 / DSM 1251) (Thiomicrospira denitrificans (strain ATCC 33889 / DSM 1251)).